The chain runs to 327 residues: Putative HTH-type transcriptional regulatory protein MM_0444 (327 aa).

The region spanning 132-190 is the HTH cro/C1-type domain; that stretch reads LKKARTTQSMSLGTLASMVGVSRRTISKYEEEGMDASIDVVLHLEDIFGVELAKPIDIL. Positions 143-162 form a DNA-binding region, H-T-H motif; the sequence is LGTLASMVGVSRRTISKYEE. The tract at residues 195 to 214 is disordered; sequence SRKPRKKAEPEKEEPKGKPG. Residues 201 to 211 show a composition bias toward basic and acidic residues; the sequence is KAEPEKEEPKG.

This is Putative HTH-type transcriptional regulatory protein MM_0444 from Methanosarcina mazei (strain ATCC BAA-159 / DSM 3647 / Goe1 / Go1 / JCM 11833 / OCM 88) (Methanosarcina frisia).